Here is a 94-residue protein sequence, read N- to C-terminus: ESAT-6-like protein EsxI (94 aa).

This sequence belongs to the WXG100 family. ESAT-6 subfamily.

The protein resides in the secreted. This chain is ESAT-6-like protein EsxI, found in Mycobacterium tuberculosis (strain CDC 1551 / Oshkosh).